The sequence spans 358 residues: MKPFPRAEISGDALKANLKRLRQLAPQSKVMAVVKANGYGHGLLNVAHCLASADGFGLARLEEALELRAGGVSAKLLLLEGFFRPSDVATLVEHDIDTVVHHESQLEMLEAASLAKPVTVWMKIDTGMHRLGFNLDQFEAIYQRLQACANVAKPINLMTHFACADEPDNPATAEQARRFEQMTANLPGDRTLANSAATLYWQATQADWIRPGIALYGVSPVVGDLGRNHGLEPAMELVSQLIAVRDHKAGDPVGYGSYWRAKQDTKLGVVAIGYGDGYPRNAPEGTPVWVNGRLVPVVGRVSMDMLTVDLGLDATDKVGDTAVLWGKALPVEEVAEHIGTIAYELVTKLTPRVAVCLE.

Lysine 35 functions as the Proton acceptor; specific for D-alanine in the catalytic mechanism. Lysine 35 carries the post-translational modification N6-(pyridoxal phosphate)lysine. Arginine 130 lines the substrate pocket. Tyrosine 255 acts as the Proton acceptor; specific for L-alanine in catalysis. Methionine 303 is a substrate binding site.

It belongs to the alanine racemase family. The cofactor is pyridoxal 5'-phosphate.

The enzyme catalyses L-alanine = D-alanine. It participates in amino-acid biosynthesis; D-alanine biosynthesis; D-alanine from L-alanine: step 1/1. Catalyzes the interconversion of L-alanine and D-alanine. May also act on other amino acids. The protein is Alanine racemase (alr) of Shewanella loihica (strain ATCC BAA-1088 / PV-4).